The following is a 601-amino-acid chain: Glutathione-regulated potassium-efflux system protein KefB (601 aa).

Helical transmembrane passes span 4–24 (ADLL…VPLA), 29–49 (IGAV…GLGF), 55–75 (EILH…GLEL), 87–107 (IFGV…GLLM), 111–131 (FLWQ…TAMA), 152–172 (VLLF…LLAG), 177–197 (HFDW…LIGG), 207–227 (FIAA…LVLS), 230–250 (LFMD…GVLL), 262–282 (AIDP…GMSL), 284–304 (LGVL…LVVI), 324–344 (MQFA…FSTA), and 356–376 (ALLL…MKGI). An RCK N-terminal domain is found at 400-519 (KPQVIVVGFG…AGVTQFSRET (120 aa)).

The protein belongs to the monovalent cation:proton antiporter 2 (CPA2) transporter (TC 2.A.37) family. KefB subfamily. In terms of assembly, interacts with the regulatory subunit KefG.

The protein resides in the cell inner membrane. Functionally, pore-forming subunit of a potassium efflux system that confers protection against electrophiles. Catalyzes K(+)/H(+) antiport. The sequence is that of Glutathione-regulated potassium-efflux system protein KefB from Salmonella newport (strain SL254).